We begin with the raw amino-acid sequence, 124 residues long: Tax1-binding protein 3 homolog (124 aa).

Residues 18–106 enclose the PDZ domain; it reads AVELHKQEVI…DRAVKFIKQS (89 aa).

Functionally, may regulate a number of protein-protein interactions by competing for PDZ domain binding sites. This chain is Tax1-binding protein 3 homolog, found in Caenorhabditis elegans.